Consider the following 544-residue polypeptide: Putative ankyrin repeat protein L289 (544 aa).

ANK repeat units lie at residues 31–71 (KNFS…AQNE), 72–105 (HGWT…DPNI), 110–143 (YSQT…DINH), 147–181 (LGVS…DINS), 185–218 (QGNT…DPNI), 222–255 (KGTT…NINF), 259–297 (YNET…DIPI), 300–339 (DKLS…IQCS), 340–374 (NGKT…NPNI), 378–413 (QGKT…TIDN), and 414–447 (TGQS…CVNK).

In Acanthamoeba polyphaga mimivirus (APMV), this protein is Putative ankyrin repeat protein L289.